Reading from the N-terminus, the 540-residue chain is tRNA-2-methylthio-N(6)-dimethylallyladenosine synthase (540 aa).

The MTTase N-terminal domain maps to 4–120; that stretch reads RSYEVRTFGC…LPVLLERARH (117 aa). Residues cysteine 13, cysteine 49, cysteine 83, cysteine 157, cysteine 161, and cysteine 164 each coordinate [4Fe-4S] cluster. Positions 143–374 constitute a Radical SAM core domain; sequence RASHHSAWVS…ALQDEISWAE (232 aa). Positions 376–468 constitute a TRAM domain; the sequence is RALVGRRVEV…PHHLTADGPL (93 aa). The segment at 480-540 is disordered; the sequence is WALGRDGDGG…ADACCTPVRR (61 aa). Composition is skewed to low complexity over residues 492-502 and 520-533; these read AAAQQPADGRP and GPASADAASAGADA.

Belongs to the methylthiotransferase family. MiaB subfamily. In terms of assembly, monomer. It depends on [4Fe-4S] cluster as a cofactor.

It localises to the cytoplasm. The enzyme catalyses N(6)-dimethylallyladenosine(37) in tRNA + (sulfur carrier)-SH + AH2 + 2 S-adenosyl-L-methionine = 2-methylsulfanyl-N(6)-dimethylallyladenosine(37) in tRNA + (sulfur carrier)-H + 5'-deoxyadenosine + L-methionine + A + S-adenosyl-L-homocysteine + 2 H(+). Catalyzes the methylthiolation of N6-(dimethylallyl)adenosine (i(6)A), leading to the formation of 2-methylthio-N6-(dimethylallyl)adenosine (ms(2)i(6)A) at position 37 in tRNAs that read codons beginning with uridine. This chain is tRNA-2-methylthio-N(6)-dimethylallyladenosine synthase, found in Frankia casuarinae (strain DSM 45818 / CECT 9043 / HFP020203 / CcI3).